Here is a 358-residue protein sequence, read N- to C-terminus: 3-ketosteroid-9-alpha-monooxygenase, ferredoxin reductase component (358 aa).

The 113-residue stretch at 12–124 (DHVLELQIAE…LAPSGNFVPT (113 aa)) folds into the FAD-binding FR-type domain. In terms of domain architecture, 2Fe-2S ferredoxin-type spans 269–358 (ATAVVELDGQ…SDSVEVTYDE (90 aa)). Residues cysteine 305, cysteine 310, cysteine 313, and cysteine 343 each coordinate [2Fe-2S] cluster.

As to quaternary structure, monomer. The two-component system 3-ketosteroid-9-alpha-monooxygenase is composed of an oxygenase component KshA and a reductase component KshB. FAD is required as a cofactor. The cofactor is [2Fe-2S] cluster.

It catalyses the reaction androsta-1,4-diene-3,17-dione + 2 reduced [2Fe-2S]-[ferredoxin] + O2 + 2 H(+) = 9alpha-hydroxyandrosta-1,4-diene-3,17-dione + 2 oxidized [2Fe-2S]-[ferredoxin] + H2O. It functions in the pathway lipid metabolism; steroid biosynthesis. Involved in the degradation of cholesterol. Catalyzes the introduction of a 9a-hydroxyl moiety into 1,4-androstadiene-3,17-dione (ADD) to yield the 9alpha-hydroxy-1,4-androstadiene-3,17-dione (9OHADD) intermediate which spontaneously form 3-hydroxy-9,10-seconandrost-1,3,5(10)-triene-9,17-dione (HSA) via the meta-cleavage of ring B with concomitant aromatization of ring A. The sequence is that of 3-ketosteroid-9-alpha-monooxygenase, ferredoxin reductase component (hmp) from Mycobacterium tuberculosis (strain CDC 1551 / Oshkosh).